The following is a 622-amino-acid chain: Low affinity potassium transport system protein Kup (622 aa).

12 helical membrane-spanning segments follow: residues 9-29 (LPAITLAAIGVVYGDIGTSPL), 49-69 (VFGFLSLIFWLLIFVVSIKYL), 103-123 (VIMGLIGGSFFYGEVVITPAI), 137-157 (PQLDTWIVPLSIIVLTLLFMI), 165-185 (VGQLFAPIMLTWFLILAGLGL), 213-233 (VSFIALGAVVLSITGVEALYA), 247-267 (WFTVVLPSLTLNYFGQGALLL), 276-296 (PFFLLAPDWALIPLLIIAALA), 337-357 (IYIPFVNWMLYVAVVIVIVSF), 363-383 (LAAAYGIAVTGTMVLTSILST), 396-416 (FVALILIAFLCVDIPLFTANL), and 419-439 (LLSGGWLPLSLGTVMFIVMTT).

This sequence belongs to the HAK/KUP transporter (TC 2.A.72) family.

It localises to the cell inner membrane. It carries out the reaction K(+)(in) + H(+)(in) = K(+)(out) + H(+)(out). Responsible for the low-affinity transport of potassium into the cell. Likely operates as a K(+):H(+) symporter. This chain is Low affinity potassium transport system protein Kup, found in Escherichia coli O6:K15:H31 (strain 536 / UPEC).